A 523-amino-acid polypeptide reads, in one-letter code: WD repeat-containing protein WDS homolog (523 aa).

Residues 16–48 form the LisH domain; sequence KKHEFIRILVQCLYSLGFKNSASCLEFESKILY. A CTLH domain is found at 49-107; sequence KTADSEFLEKQVLSGNWDSCVQVLDRIFDNSMDDTRNTALYLVFKQCLLEYLKRGDVSL. WD repeat units lie at residues 222–261, 267–306, 310–353, 355–394, 395–434, 438–480, and 483–523; these read AHKNEVWFVQFSNSGKYLATASSDCTAIIWKVLDDNKVEL, SHQNPVSFVSWSPDDTKLLTCGNAEVLKLWDVDTGVLRHT, NNTG…KAWR, TRIPKVVDLAVTPDGESMITVFSDKEIRILNLETKVERVI, SEEQPITSLSISGDGKFFIVNLSCQEIHLWDLAGEWKQPL, GHRQ…PLEV, and GHSM…KPLN.

As to quaternary structure, interacts with RANBPM.

It is found in the cytoplasm. This chain is WD repeat-containing protein WDS homolog, found in Arabidopsis thaliana (Mouse-ear cress).